A 346-amino-acid polypeptide reads, in one-letter code: L-threonine dehydratase catabolic TdcB (346 aa).

An AMP-binding site is contributed by 59–60; sequence FT. K64 is subject to N6-(pyridoxal phosphate)lysine. AMP contacts are provided by residues Q94, 125–126, and N321; that span reads GY.

The protein belongs to the serine/threonine dehydratase family. In the native structure, TdcB is in a dimeric form, whereas in the TdcB-AMP complex, it exists in a tetrameric form (dimer of dimers). It depends on pyridoxal 5'-phosphate as a cofactor.

The enzyme catalyses L-threonine = 2-oxobutanoate + NH4(+). The protein operates within amino-acid degradation; L-threonine degradation via propanoate pathway; propanoate from L-threonine: step 1/4. With respect to regulation, each protein molecule can bind up to four molecules of AMP, which act as an allosteric activator to the enzyme. Its function is as follows. Catalyzes the anaerobic formation of alpha-ketobutyrate and ammonia from threonine in a two-step reaction. The first step involved a dehydration of threonine and a production of enamine intermediates (aminocrotonate), which tautomerizes to its imine form (iminobutyrate). Both intermediates are unstable and short-lived. The second step is the nonenzymatic hydrolysis of the enamine/imine intermediates to form 2-ketobutyrate and free ammonia. In the low water environment of the cell, the second step is accelerated by RidA. This chain is L-threonine dehydratase catabolic TdcB (tdcB), found in Staphylococcus aureus (strain bovine RF122 / ET3-1).